A 315-amino-acid polypeptide reads, in one-letter code: 2-oxoglutarate and iron-dependent oxygenase domain-containing protein 3 (315 aa).

The disordered stretch occupies residues 1–32; the sequence is MAPQRRGPPRVPEGNSAAERRHANSTKKDRLP. Topologically, residues 1–41 are cytoplasmic; sequence MAPQRRGPPRVPEGNSAAERRHANSTKKDRLPQEAQRTWLR. Basic and acidic residues predominate over residues 18–32; the sequence is AERRHANSTKKDRLP. A helical; Signal-anchor for type II membrane protein transmembrane segment spans residues 42-62; that stretch reads IVALGVSLALVTFLLWSSAGI. The Lumenal segment spans residues 63-315; it reads DDDVAEVVAH…DHGIEDPVLT (253 aa). Residues 203 to 305 enclose the Fe2OG dioxygenase domain; it reads KPTFFSRINS…AITIAFTCNP (103 aa). Asn211 carries N-linked (GlcNAc...) asparagine glycosylation. 2 residues coordinate Fe cation: His226 and Asp228. Asn263 carries N-linked (GlcNAc...) asparagine glycosylation. His284 provides a ligand contact to Fe cation. Arg294 is an active-site residue. Arg294 provides a ligand contact to 2-oxoglutarate.

It belongs to the OGFOD3 family. Fe(2+) serves as cofactor. It depends on L-ascorbate as a cofactor.

Its subcellular location is the membrane. In Rattus norvegicus (Rat), this protein is 2-oxoglutarate and iron-dependent oxygenase domain-containing protein 3 (Ogfod3).